Here is a 105-residue protein sequence, read N- to C-terminus: Thioredoxin (105 aa).

Residues 2 to 105 (VKQIESKYAF…KLEATINELI (104 aa)) form the Thioredoxin domain. An N6-acetyllysine modification is found at Lys3. An N6-succinyllysine modification is found at Lys8. Catalysis depends on nucleophile residues Cys32 and Cys35. Cys32 and Cys35 are disulfide-bonded. An N6-acetyllysine modification is found at Lys39. An S-nitrosocysteine mark is found at Cys62 and Cys69. Cys73 carries the post-translational modification S-nitrosocysteine; alternate. N6-acetyllysine; alternate is present on Lys94. The residue at position 94 (Lys94) is an N6-succinyllysine; alternate.

The protein belongs to the thioredoxin family. As to quaternary structure, homodimer; disulfide-linked. Interacts with TXNIP through the redox-active site. Interacts with MAP3K5 and CASP3. Interacts with APEX1; the interaction stimulates the FOS/JUN AP-1 DNA-binding activity in a redox-dependent manner. In terms of processing, in the fully reduced protein, both Cys-69 and Cys-73 are nitrosylated in response to nitric oxide (NO). When two disulfide bonds are present in the protein, only Cys-73 is nitrosylated. Cys-73 can serve as donor for nitrosylation of target proteins.

The protein resides in the nucleus. The protein localises to the cytoplasm. Its subcellular location is the secreted. Its function is as follows. Participates in various redox reactions through the reversible oxidation of its active center dithiol to a disulfide and catalyzes dithiol-disulfide exchange reactions. Plays a role in the reversible S-nitrosylation of cysteine residues in target proteins, and thereby contributes to the response to intracellular nitric oxide. Nitrosylates the active site Cys of CASP3 in response to nitric oxide (NO), and thereby inhibits caspase-3 activity. Induces the FOS/JUN AP-1 DNA binding activity in ionizing radiation (IR) cells through its oxidation/reduction status and stimulates AP-1 transcriptional activity. This chain is Thioredoxin (TXN), found in Bos taurus (Bovine).